A 193-amino-acid chain; its full sequence is Major intrinsically disordered NOTCH2-binding receptor 1-like homolog (193 aa).

Residue Ser82 is modified to Phosphoserine. An N-linked (GlcNAc...) asparagine glycan is attached at Asn128. Residues 172 to 192 form a helical membrane-spanning segment; sequence GLILLLVASILVTIVTLSTIF.

This sequence belongs to the MINAR family. In terms of assembly, interacts with NOTCH2. In terms of tissue distribution, widely expressed in the cortex and Purkinje cells of cerebellum. Expressed in the inner ear, mainly in the hair cells, spiral ganglia, the spiral limbus, and the stria vascularis.

It is found in the lysosome membrane. The protein resides in the endoplasmic reticulum membrane. Its function is as follows. Binds cholesterol and may regulate the distribution and homeostasis of cholesterol in hair cells. May play a role in angiogenesis. This is Major intrinsically disordered NOTCH2-binding receptor 1-like homolog from Mus musculus (Mouse).